We begin with the raw amino-acid sequence, 32 residues long: Protamine-2 (32 aa).

Positions 1-32 (PRRRRSSSRPVRRRRARRVSRRRRRRGGRRRR) are disordered.

In terms of tissue distribution, testis.

It is found in the nucleus. The protein localises to the chromosome. Functionally, protamines substitute for histones in the chromatin of sperm during the haploid phase of spermatogenesis. They compact sperm DNA into a highly condensed, stable and inactive complex. The protein is Protamine-2 of Oncorhynchus mykiss (Rainbow trout).